A 411-amino-acid polypeptide reads, in one-letter code: Class E basic helix-loop-helix protein 40 (411 aa).

A disordered region spans residues 1–20 (MERIPSAQPPPTCLPKAPGL). The interval 1–139 (MERIPSAQPP…LSGRNLEAGQ (139 aa)) is essential for interaction with BMAL1, E-box binding and repressor activity against the CLOCK-BMAL1 heterodimer. Residues 52-107 (TYKLPHRLIEKKRRDRINECIAQLKDLLPEHLKLTTLGHLEKAVVLELTLKHVKAL) enclose the bHLH domain. Residues 75–79 (LKDLL) are necessary for interaction with RXRA and repressor activity against RXRA. Residues 142-175 (FCSGFQTCAREVLQYLAKHENTRDLKSSQLVTHL) enclose the Orange domain. Residue lysine 159 forms a Glycyl lysine isopeptide (Lys-Gly) (interchain with G-Cter in SUMO1, SUMO2 and SUMO3) linkage. Residue lysine 167 forms a Glycyl lysine isopeptide (Lys-Gly) (interchain with G-Cter in SUMO2) linkage. A disordered region spans residues 227–294 (FAPSGGEQSG…PPTKKSRMQL (68 aa)). A Phosphoserine modification is found at serine 235. The segment covering 248 to 271 (ELEKGDLRSEQPYFKSDHGRRFAV) has biased composition (basic and acidic residues). A Glycyl lysine isopeptide (Lys-Gly) (interchain with G-Cter in SUMO1); alternate cross-link involves residue lysine 279. A Glycyl lysine isopeptide (Lys-Gly) (interchain with G-Cter in SUMO1, SUMO2 and SUMO3); alternate cross-link involves residue lysine 279. Lysine 279 is covalently cross-linked (Glycyl lysine isopeptide (Lys-Gly) (interchain with G-Cter in SUMO2); alternate). Residue lysine 288 forms a Glycyl lysine isopeptide (Lys-Gly) (interchain with G-Cter in SUMO2) linkage. Serine 383 carries the post-translational modification Phosphoserine.

Homodimer. Heterodimer with BHLHE41/DEC2. Interacts with ubiquitin-conjugating enzyme UBE2I/UBC9. Interacts with HDAC1, SUMO1, RXRA and BMAL1. Interacts with TCF3/E47. In terms of processing, ubiquitinated; which may lead to proteasomal degradation. Sumoylation inhibits its ubiquitination and promotes its negative regulation of the CLOCK-BMAL1 heterodimer transcriptional activator activity.

The protein resides in the cytoplasm. The protein localises to the nucleus. In terms of biological role, transcriptional repressor involved in the regulation of the circadian rhythm by negatively regulating the activity of the clock genes and clock-controlled genes. Acts as the negative limb of a novel autoregulatory feedback loop (DEC loop) which differs from the one formed by the PER and CRY transcriptional repressors (PER/CRY loop). Both these loops are interlocked as it represses the expression of PER1/2 and in turn is repressed by PER1/2 and CRY1/2. Represses the activity of the circadian transcriptional activator: CLOCK-BMAL1|BMAL2 heterodimer by competing for the binding to E-box elements (5'-CACGTG-3') found within the promoters of its target genes. Negatively regulates its own expression and the expression of DBP and BHLHE41/DEC2. Acts as a corepressor of RXR and the RXR-LXR heterodimers and represses the ligand-induced RXRA and NR1H3/LXRA transactivation activity. May function as a transcriptional factor for neuronal differentiation. Represses the transcription of NR0B2 and attentuates the transactivation of NR0B2 by the CLOCK-BMAL1 complex. Drives the circadian rhythm of blood pressure through transcriptional repression of ATP1B1 in the cardiovascular system. The protein is Class E basic helix-loop-helix protein 40 (Bhlhe40) of Mus musculus (Mouse).